The sequence spans 152 residues: Regulatory protein RecX (152 aa).

It belongs to the RecX family.

It localises to the cytoplasm. In terms of biological role, modulates RecA activity. This is Regulatory protein RecX from Haemophilus influenzae (strain PittGG).